The primary structure comprises 138 residues: Calmodulin-beta (138 aa).

4 consecutive EF-hand domains span residues 1–32 (EFKEAFSLFDKDGDGTITTKELGTVMRSLGQN), 33–68 (PTEAELQDMINEVDADGNGTIDFPEFLTMMARKMKE), 70–105 (DSEEEIREAFRVFDKDGNGFISAAELRHVMTNLGEK), and 106–138 (LTDEEVDEMIREADIDGDGQVNYEEFVAMMTSK). The Ca(2+) site is built by aspartate 10, aspartate 12, aspartate 14, threonine 16, glutamate 21, aspartate 46, aspartate 48, asparagine 50, threonine 52, glutamate 57, aspartate 83, aspartate 85, asparagine 87, glutamate 94, aspartate 119, aspartate 121, aspartate 123, glutamine 125, and glutamate 130.

This sequence belongs to the calmodulin family.

Its function is as follows. Calmodulin mediates the control of a large number of enzymes, ion channels and other proteins by Ca(2+). Among the enzymes to be stimulated by the calmodulin-Ca(2+) complex are a number of protein kinases and phosphatases. The protein is Calmodulin-beta of Arbacia punctulata (Punctuate sea urchin).